The following is a 262-amino-acid chain: Small ribosomal subunit protein uS2 (262 aa).

Residues 240 to 262 (NLDEKEESQEAESTEENTTVESN) form a disordered region. Positions 243-254 (EKEESQEAESTE) are enriched in acidic residues.

Belongs to the universal ribosomal protein uS2 family.

This is Small ribosomal subunit protein uS2 from Staphylococcus haemolyticus (strain JCSC1435).